Here is an 874-residue protein sequence, read N- to C-terminus: Alanine--tRNA ligase (874 aa).

Zn(2+)-binding residues include His-564, His-568, Cys-665, and His-669.

This sequence belongs to the class-II aminoacyl-tRNA synthetase family. It depends on Zn(2+) as a cofactor.

It localises to the cytoplasm. It catalyses the reaction tRNA(Ala) + L-alanine + ATP = L-alanyl-tRNA(Ala) + AMP + diphosphate. In terms of biological role, catalyzes the attachment of alanine to tRNA(Ala) in a two-step reaction: alanine is first activated by ATP to form Ala-AMP and then transferred to the acceptor end of tRNA(Ala). Also edits incorrectly charged Ser-tRNA(Ala) and Gly-tRNA(Ala) via its editing domain. This Burkholderia cenocepacia (strain HI2424) protein is Alanine--tRNA ligase.